We begin with the raw amino-acid sequence, 285 residues long: K88 fimbrial protein AD (285 aa).

The N-terminal stretch at 1 to 21 (MKKTLIALAIAASAASGMAHA) is a signal peptide.

It belongs to the fimbrial K88 protein family. K88 fimbria, 0.1-1 micrometer in length and 7 nanometers in diameter, is composed of about 100 identical subunits.

The protein localises to the fimbrium. K88 major fimbrial subunit. Fimbriae (also called pili), are polar filaments radiating from the surface of the bacterium to a length of 0.5-1.5 micrometers and numbering 100-300 per cell. They enable bacteria to colonize the epithelium of specific host organs. The sequence is that of K88 fimbrial protein AD (faeG) from Escherichia coli.